The sequence spans 274 residues: Elongation factor Ts (274 aa).

Positions 82–85 (TDFV) are involved in Mg(2+) ion dislocation from EF-Tu.

This sequence belongs to the EF-Ts family.

The protein resides in the cytoplasm. Its function is as follows. Associates with the EF-Tu.GDP complex and induces the exchange of GDP to GTP. It remains bound to the aminoacyl-tRNA.EF-Tu.GTP complex up to the GTP hydrolysis stage on the ribosome. The sequence is that of Elongation factor Ts from Flavobacterium psychrophilum (strain ATCC 49511 / DSM 21280 / CIP 103535 / JIP02/86).